A 436-amino-acid polypeptide reads, in one-letter code: Proline transporter 3 (436 aa).

Transmembrane regions (helical) follow at residues 29–49, 52–72, 118–138, 151–171, 172–192, 216–236, 254–274, 296–316, 345–365, 366–386, and 405–425; these read SWFQ…VLGY, TVMV…ATAI, LFMI…AVYV, FIAI…HLSA, LGIW…VAIV, LFTI…GMLP, LYFQ…IGYW, ALAN…FASP, GGYI…GDFM, SLTG…HMYY, and VVFF…LIAL.

The protein belongs to the amino acid/polyamine transporter 2 family. Amino acid/auxin permease (AAAP) (TC 2.A.18.3) subfamily. As to expression, expressed in epidermal cells of leaves, sepals and petals.

It is found in the cell membrane. Proline transporter that mediates proline and glycine betaine transport. When expressed in a heterologous system (yeast), imports L-proline, glycine betaine and GABA across the plasma membrane. The chain is Proline transporter 3 (PROT3) from Arabidopsis thaliana (Mouse-ear cress).